Consider the following 176-residue polypeptide: Magnesium-dependent phosphatase 1 (176 aa).

D11 serves as the catalytic Nucleophile. D11 contacts Mg(2+). L12 and D13 together coordinate phosphate. Residue D13 participates in Mg(2+) binding. D13 serves as the catalytic Proton donor. Position 20 (W20) interacts with substrate. Positions 69, 70, and 100 each coordinate phosphate. R70 lines the substrate pocket. Residue D123 participates in Mg(2+) binding.

It belongs to the HAD-like hydrolase superfamily. Mg(2+) is required as a cofactor.

It catalyses the reaction O-phospho-L-tyrosyl-[protein] + H2O = L-tyrosyl-[protein] + phosphate. With respect to regulation, inhibited by vanadate and zinc, and slightly by calcium. In terms of biological role, magnesium-dependent phosphatase which may act as a tyrosine phosphatase. The polypeptide is Magnesium-dependent phosphatase 1 (MDP1) (Homo sapiens (Human)).